The chain runs to 124 residues: Cysteine-rich DPF motif domain-containing protein 1 (124 aa).

The disordered stretch occupies residues 105–124 (MDKRKPQSKCLTRKKKDSRT). The span at 115–124 (LTRKKKDSRT) shows a compositional bias: basic residues.

This sequence belongs to the CDPF1 family.

This chain is Cysteine-rich DPF motif domain-containing protein 1 (CDPF1), found in Gallus gallus (Chicken).